Reading from the N-terminus, the 158-residue chain is Extracellular giant hemoglobin major globin subunit A2 (158 aa).

Residues 1-16 (MKSLIVFACLVAYAAA) form the signal peptide. Residues 17-158 (DCTSLNRLLV…MNQIVSGISG (142 aa)) form the Globin domain. Cys-18 and Cys-148 are disulfide-bonded. Cys-89 lines the hydrogen sulfide pocket. His-110 serves as a coordination point for heme b.

This sequence belongs to the globin family. In terms of assembly, the 400 kDa hemoglobin consists of a spherical 24-mer arranged as a double layer of dome-shaped dodecamers. Each dodecamer is composed of the 3-fold trimer of the tetramer A1-A2-B1-B2 having one intra-tetramer (A1-B2) disulfide bond and one inter-tetramer (B1-B2) disulfide bond per tetramer.

It localises to the secreted. Its function is as follows. The extracellular giant hemoglobin is able to bind and transport oxygen and hydrosulfide simultaneously and reversibly at two different sites. The polypeptide is Extracellular giant hemoglobin major globin subunit A2 (ghbA2) (Oligobrachia mashikoi (Beard worm)).